We begin with the raw amino-acid sequence, 316 residues long: Serine protease 45 (316 aa).

The N-terminal stretch at 1 to 38 (MAASLSRLSAGLAASRPLGLSRSFLLLVLLLLNSGYKG) is a signal peptide. The Peptidase S1 domain occupies 49–290 (WWPKNLDLSR…YSRWIKKQIS (242 aa)). Cys74 and Cys90 form a disulfide bridge. Catalysis depends on His89, which acts as the Charge relay system. Asn110 is a glycosylation site (N-linked (GlcNAc...) asparagine). Asp137 functions as the Charge relay system in the catalytic mechanism. Residues Asn162 and Asn186 are each glycosylated (N-linked (GlcNAc...) asparagine). Cystine bridges form between Cys171-Cys248, Cys206-Cys229, and Cys238-Cys266. Ser242 serves as the catalytic Charge relay system.

It belongs to the peptidase S1 family.

It localises to the secreted. In Bos taurus (Bovine), this protein is Serine protease 45 (PRSS45).